The following is a 662-amino-acid chain: Eukaryotic peptide chain release factor GTP-binding subunit (662 aa).

Residues 9-102 (QQGGQQNAGG…NQFQPQQQSQ (94 aa)) are several sort of repeats. 2 stretches are compositionally biased toward low complexity: residues 73-102 (AYNGYPYQAQGAPGGFNNYNNQFQPQQQSQ) and 128-137 (KLVSSSGIKL). The segment at 73 to 193 (AYNGYPYQAQ…AKDEKKEDLP (121 aa)) is disordered. Residues 103-230 (GMTLDDFHKQ…EEVDEGVVND (128 aa)) are charged. Positions 143–193 (KPKEDEKKEEEPKKEEKKAEPKEQESKKEEPKREGTPRPAAAKDEKKEDLP) are enriched in basic and acidic residues. In terms of domain architecture, tr-type G spans 235 to 461 (KDHMSIIFMG…YMDNMSHVDR (227 aa)). Positions 244–251 (GHVDAGKS) are G1. 244–251 (GHVDAGKS) serves as a coordination point for GTP. Residues 300 to 304 (GKTIE) are G2. At Thr-318 the chain carries Phosphothreonine. Residues 321–324 (DAPG) are G3. GTP-binding positions include 321–325 (DAPGH) and 383–386 (NKMD). The G4 stretch occupies residues 383-386 (NKMD). The segment at 425–427 (SGY) is G5.

The protein belongs to the TRAFAC class translation factor GTPase superfamily. Classic translation factor GTPase family. ERF3 subfamily.

It is found in the cytoplasm. Its function is as follows. Involved in translation termination. Stimulates the activity of ERF1. Binds guanine nucleotides. In Zygosaccharomyces rouxii, this protein is Eukaryotic peptide chain release factor GTP-binding subunit (SUP35).